Reading from the N-terminus, the 306-residue chain is MSVPDTSAVKAFLLDLQQRICEGLEQLDGKGTFEADSWKREEGGGGTSRVLTNGKVFEQAGVNFSHVTGAAMPASATANRSELEGRSFEAMGVSLVIHPKNPFLPTTHANVRFFIAKKEGADPVWWFGGGFDLTPYYPFEEDVIEWHQNAHDLCQPFGESVYPKYKKWCDEYFFLPHRNETRGVGGLFFDDLNQDGFEKSFEFMQAVGNGFLTSYAPIVERRKDTEYGEKEREFQLYRRGRYVEFNLVYDRGTLFGLQTGGRTESILMSMPPLVRWQYAYTPEENSAEALLYTDFLKPKDWLNLDE.

Serine 94 lines the substrate pocket. 2 residues coordinate a divalent metal cation: histidine 98 and histidine 108. The Proton donor role is filled by histidine 108. 110 to 112 contacts substrate; sequence NVR. A divalent metal cation is bound by residues histidine 147 and histidine 177. Positions 242–277 are important for dimerization; sequence YVEFNLVYDRGTLFGLQTGGRTESILMSMPPLVRWQ. Substrate is bound at residue 260 to 262; sequence GGR.

Belongs to the aerobic coproporphyrinogen-III oxidase family. Homodimer. A divalent metal cation serves as cofactor.

The protein resides in the cytoplasm. It catalyses the reaction coproporphyrinogen III + O2 + 2 H(+) = protoporphyrinogen IX + 2 CO2 + 2 H2O. The protein operates within porphyrin-containing compound metabolism; protoporphyrin-IX biosynthesis; protoporphyrinogen-IX from coproporphyrinogen-III (O2 route): step 1/1. In terms of biological role, involved in the heme biosynthesis. Catalyzes the aerobic oxidative decarboxylation of propionate groups of rings A and B of coproporphyrinogen-III to yield the vinyl groups in protoporphyrinogen-IX. The sequence is that of Oxygen-dependent coproporphyrinogen-III oxidase from Shewanella sediminis (strain HAW-EB3).